The chain runs to 416 residues: NADH-quinone oxidoreductase subunit D (416 aa).

The protein belongs to the complex I 49 kDa subunit family. As to quaternary structure, NDH-1 is composed of 14 different subunits. Subunits NuoB, C, D, E, F, and G constitute the peripheral sector of the complex.

Its subcellular location is the cell inner membrane. It catalyses the reaction a quinone + NADH + 5 H(+)(in) = a quinol + NAD(+) + 4 H(+)(out). Functionally, NDH-1 shuttles electrons from NADH, via FMN and iron-sulfur (Fe-S) centers, to quinones in the respiratory chain. The immediate electron acceptor for the enzyme in this species is believed to be ubiquinone. Couples the redox reaction to proton translocation (for every two electrons transferred, four hydrogen ions are translocated across the cytoplasmic membrane), and thus conserves the redox energy in a proton gradient. In Rhodopseudomonas palustris (strain BisB5), this protein is NADH-quinone oxidoreductase subunit D.